The following is a 231-amino-acid chain: 5'-methylthioadenosine/S-adenosylhomocysteine nucleosidase (231 aa).

The Proton acceptor role is filled by Glu12. Residues Gly78, Met153, and 174 to 175 (ME) each bind substrate. Asp198 functions as the Proton donor in the catalytic mechanism.

Belongs to the PNP/UDP phosphorylase family. MtnN subfamily.

It carries out the reaction S-adenosyl-L-homocysteine + H2O = S-(5-deoxy-D-ribos-5-yl)-L-homocysteine + adenine. The enzyme catalyses S-methyl-5'-thioadenosine + H2O = 5-(methylsulfanyl)-D-ribose + adenine. The catalysed reaction is 5'-deoxyadenosine + H2O = 5-deoxy-D-ribose + adenine. The protein operates within amino-acid biosynthesis; L-methionine biosynthesis via salvage pathway; S-methyl-5-thio-alpha-D-ribose 1-phosphate from S-methyl-5'-thioadenosine (hydrolase route): step 1/2. Its function is as follows. Catalyzes the irreversible cleavage of the glycosidic bond in both 5'-methylthioadenosine (MTA) and S-adenosylhomocysteine (SAH/AdoHcy) to adenine and the corresponding thioribose, 5'-methylthioribose and S-ribosylhomocysteine, respectively. Also cleaves 5'-deoxyadenosine, a toxic by-product of radical S-adenosylmethionine (SAM) enzymes, into 5-deoxyribose and adenine. The sequence is that of 5'-methylthioadenosine/S-adenosylhomocysteine nucleosidase from Bacillus cereus (strain B4264).